We begin with the raw amino-acid sequence, 227 residues long: NAD(P)H-quinone oxidoreductase subunit K, chloroplastic (227 aa).

4 residues coordinate [4Fe-4S] cluster: cysteine 43, cysteine 44, cysteine 108, and cysteine 139.

The protein belongs to the complex I 20 kDa subunit family. As to quaternary structure, NDH is composed of at least 16 different subunits, 5 of which are encoded in the nucleus. [4Fe-4S] cluster is required as a cofactor.

The protein resides in the plastid. Its subcellular location is the chloroplast thylakoid membrane. The catalysed reaction is a plastoquinone + NADH + (n+1) H(+)(in) = a plastoquinol + NAD(+) + n H(+)(out). It catalyses the reaction a plastoquinone + NADPH + (n+1) H(+)(in) = a plastoquinol + NADP(+) + n H(+)(out). NDH shuttles electrons from NAD(P)H:plastoquinone, via FMN and iron-sulfur (Fe-S) centers, to quinones in the photosynthetic chain and possibly in a chloroplast respiratory chain. The immediate electron acceptor for the enzyme in this species is believed to be plastoquinone. Couples the redox reaction to proton translocation, and thus conserves the redox energy in a proton gradient. In Spinacia oleracea (Spinach), this protein is NAD(P)H-quinone oxidoreductase subunit K, chloroplastic.